The chain runs to 344 residues: MQFDAVLLLSFGGPEGPEQVRPFLENVTRGRGVPAERLDAVAEHYLHFGGVSPINGINRTLIAELEAQQELPVYFGNRNWEPYVEDAVTAMRDNGVRRAAVFATSAWSGYSSCTQYVEDIARARRAAGRDAPELVKLRPYFDHPLFVEMFADAITAAAATVRGDARLVFTAHSIPTAADRRCGPNLYSRQVAYATRLVAAAAGYCDFDLAWQSRSGPPQVPWLEPDVTDQLTGLAGAGINAVIVCPIGFVADHIEVVWDLDHELRLQAEAAGIAYARASTPNADPRFARLARGLIDELRYGRIPARVSGPDPVPGCLSSINGQPCRPPHCVASVSPARPSAGSP.

Ser52 provides a ligand contact to Fe-coproporphyrin III. Cys113 is a [2Fe-2S] cluster binding site. Residue Tyr116 participates in Fe-coproporphyrin III binding. Fe(2+)-binding residues include His172 and Glu255. 3 residues coordinate [2Fe-2S] cluster: Cys316, Cys325, and Cys330.

The protein belongs to the ferrochelatase family. Requires [2Fe-2S] cluster as cofactor.

Its subcellular location is the cytoplasm. The enzyme catalyses Fe-coproporphyrin III + 2 H(+) = coproporphyrin III + Fe(2+). It participates in porphyrin-containing compound metabolism; protoheme biosynthesis. Involved in coproporphyrin-dependent heme b biosynthesis. Catalyzes the insertion of ferrous iron into coproporphyrin III to form Fe-coproporphyrin III. This is Coproporphyrin III ferrochelatase from Mycobacterium bovis (strain ATCC BAA-935 / AF2122/97).